The primary structure comprises 221 residues: uncharacterized protein (221 aa).

Transmembrane regions (helical) follow at residues 41–63 (TGNI…HSLI), 78–100 (AVMY…SSLS), 141–163 (ILAY…ISFL), and 178–200 (LILR…VNLF).

Its subcellular location is the cell membrane. This is an uncharacterized protein from Archaeoglobus fulgidus (strain ATCC 49558 / DSM 4304 / JCM 9628 / NBRC 100126 / VC-16).